Consider the following 644-residue polypeptide: Chaperone protein DnaK (644 aa).

T199 carries the phosphothreonine; by autocatalysis modification. The disordered stretch occupies residues 602 to 644 (LYAEQSAQQQGSAGATGGEQPKADKAADDGVVDAEFEEVKDDK). The span at 604-614 (AEQSAQQQGSA) shows a compositional bias: low complexity. The segment covering 631–644 (GVVDAEFEEVKDDK) has biased composition (acidic residues).

The protein belongs to the heat shock protein 70 family.

Functionally, acts as a chaperone. This Teredinibacter turnerae (strain ATCC 39867 / T7901) protein is Chaperone protein DnaK.